Reading from the N-terminus, the 185-residue chain is MLMEQFLDYIGKLLFKIFMTIFPHAYKFYLTMWKIIFSLINCIKIVYYVDHQGEIMNVTHLYYLGIMRKTQGVFFLKLYDINGCHYMGFRGNINLIDNIQPINYDSYSRKTILFSHGGNSVNFQMECLDNYYNNCKLFDDSVQELVLILKMFNVKCTHISFISLKPFSRNNVEINDVKLTDLYNL.

This is an uncharacterized protein from Acanthamoeba polyphaga (Amoeba).